We begin with the raw amino-acid sequence, 87 residues long: Class II metallothionein-like protein 1A (87 aa).

This sequence belongs to the metallothionein superfamily. Type 15 family. In terms of tissue distribution, expressed in developing seeds.

Functionally, metallothioneins have a high content of cysteine residues that bind various heavy metals. This chain is Class II metallothionein-like protein 1A (MT21A), found in Oryza sativa subsp. japonica (Rice).